The primary structure comprises 423 residues: Acetylornithine aminotransferase, mitochondrial (423 aa).

The N-terminal 13 residues, 1–13, are a transit peptide targeting the mitochondrion; that stretch reads MFKRYLSSTSSRR. Lysine 276 bears the N6-(pyridoxal phosphate)lysine mark.

It belongs to the class-III pyridoxal-phosphate-dependent aminotransferase family. The cofactor is pyridoxal 5'-phosphate.

It localises to the mitochondrion matrix. It catalyses the reaction N(2)-acetyl-L-ornithine + 2-oxoglutarate = N-acetyl-L-glutamate 5-semialdehyde + L-glutamate. The protein operates within amino-acid biosynthesis; L-arginine biosynthesis; N(2)-acetyl-L-ornithine from L-glutamate: step 4/4. Functionally, catalyzes the conversion of N-acetylglutamate-gamma-semialdehyde (NAGSA) to N-acetylornithine in arginine biosynthesis. The protein is Acetylornithine aminotransferase, mitochondrial (ARG8) of Saccharomyces cerevisiae (strain ATCC 204508 / S288c) (Baker's yeast).